Consider the following 1253-residue polypeptide: Guanine nucleotide exchange factor SDC25 (1253 aa).

The 73-residue stretch at Gln26–Asn98 folds into the SH3 domain. Residues Leu624 to Glu649 form a disordered region. Positions Gly782–Phe914 constitute an N-terminal Ras-GEF domain. Positions Val952 to Pro1199 constitute a Ras-GEF domain. The segment at Arg1202–Lys1253 is disordered. Residues Ser1215–Pro1237 show a composition bias toward basic and acidic residues. The segment covering Gln1240–Lys1253 has biased composition (basic residues).

In terms of biological role, promotes the exchange of Ras-bound GDP by GTP. The chain is Guanine nucleotide exchange factor SDC25 (SDC25) from Saccharomyces cerevisiae (Baker's yeast).